The chain runs to 116 residues: Putative UPF0320 protein YLL065W (116 aa).

Belongs to the UPF0320 family.

The chain is Putative UPF0320 protein YLL065W from Saccharomyces cerevisiae (strain ATCC 204508 / S288c) (Baker's yeast).